The sequence spans 233 residues: 2-C-methyl-D-erythritol 4-phosphate cytidylyltransferase (233 aa).

It belongs to the IspD/TarI cytidylyltransferase family. IspD subfamily.

The catalysed reaction is 2-C-methyl-D-erythritol 4-phosphate + CTP + H(+) = 4-CDP-2-C-methyl-D-erythritol + diphosphate. It participates in isoprenoid biosynthesis; isopentenyl diphosphate biosynthesis via DXP pathway; isopentenyl diphosphate from 1-deoxy-D-xylulose 5-phosphate: step 2/6. Catalyzes the formation of 4-diphosphocytidyl-2-C-methyl-D-erythritol from CTP and 2-C-methyl-D-erythritol 4-phosphate (MEP). This chain is 2-C-methyl-D-erythritol 4-phosphate cytidylyltransferase, found in Lachnoclostridium phytofermentans (strain ATCC 700394 / DSM 18823 / ISDg) (Clostridium phytofermentans).